The primary structure comprises 212 residues: Pyridoxine/pyridoxamine 5'-phosphate oxidase (212 aa).

Substrate contacts are provided by residues 8–11 (RKNY) and K66. FMN is bound by residues 61–66 (RIVLIK), 76–77 (FT), R82, K83, and Q105. Substrate contacts are provided by Y123, R127, and S131. Residues 140 to 141 (QS) and W184 each bind FMN. Residue 190 to 192 (RLH) coordinates substrate. FMN is bound at residue R194.

The protein belongs to the pyridoxamine 5'-phosphate oxidase family. As to quaternary structure, homodimer. Requires FMN as cofactor.

The enzyme catalyses pyridoxamine 5'-phosphate + O2 + H2O = pyridoxal 5'-phosphate + H2O2 + NH4(+). The catalysed reaction is pyridoxine 5'-phosphate + O2 = pyridoxal 5'-phosphate + H2O2. Its pathway is cofactor metabolism; pyridoxal 5'-phosphate salvage; pyridoxal 5'-phosphate from pyridoxamine 5'-phosphate: step 1/1. It participates in cofactor metabolism; pyridoxal 5'-phosphate salvage; pyridoxal 5'-phosphate from pyridoxine 5'-phosphate: step 1/1. In terms of biological role, catalyzes the oxidation of either pyridoxine 5'-phosphate (PNP) or pyridoxamine 5'-phosphate (PMP) into pyridoxal 5'-phosphate (PLP). The sequence is that of Pyridoxine/pyridoxamine 5'-phosphate oxidase from Paraburkholderia phymatum (strain DSM 17167 / CIP 108236 / LMG 21445 / STM815) (Burkholderia phymatum).